Reading from the N-terminus, the 276-residue chain is Nickel import system permease protein NikC (276 aa).

The next 5 helical transmembrane spans lie at 10 to 30, 73 to 93, 108 to 128, 186 to 206, and 238 to 258; these read LIFF…FFVS, LFVT…LGLF, FIDV…ASFF, IIPA…LYIS, and IMLI…NLTG. An ABC transmembrane type-1 domain is found at 69 to 258; the sequence is ARSTLFVTVL…ITILIFNLTG (190 aa).

It belongs to the binding-protein-dependent transport system permease family. OppBC subfamily. As to quaternary structure, the complex is composed of two ATP-binding proteins (NikD and NikE), two transmembrane proteins (NikB and NikC) and a solute-binding protein (NikA).

Its subcellular location is the cell membrane. Part of the ABC transporter complex NikABCDE (Opp2) involved in nickel import. Probably responsible for the translocation of the substrate across the membrane. The sequence is that of Nickel import system permease protein NikC from Staphylococcus aureus (strain Mu50 / ATCC 700699).